Reading from the N-terminus, the 246-residue chain is Large ribosomal subunit protein uL2 (246 aa).

Residues 197–227 (SPYAHPHGGGSHQKGGTPVPKTAPPGQKVGF) are disordered.

It belongs to the universal ribosomal protein uL2 family. Part of the 50S ribosomal subunit. Forms a bridge to the 30S subunit in the 70S ribosome.

Its function is as follows. One of the primary rRNA binding proteins. Required for association of the 30S and 50S subunits to form the 70S ribosome, for tRNA binding and peptide bond formation. It has been suggested to have peptidyltransferase activity; this is somewhat controversial. Makes several contacts with the 16S rRNA in the 70S ribosome. This chain is Large ribosomal subunit protein uL2, found in Pyrobaculum aerophilum (strain ATCC 51768 / DSM 7523 / JCM 9630 / CIP 104966 / NBRC 100827 / IM2).